A 311-amino-acid polypeptide reads, in one-letter code: Pyrimidine-specific ribonucleoside hydrolase RihA (311 aa).

His240 is a catalytic residue.

The protein belongs to the IUNH family. RihA subfamily.

Hydrolyzes cytidine or uridine to ribose and cytosine or uracil, respectively. This is Pyrimidine-specific ribonucleoside hydrolase RihA from Salmonella gallinarum (strain 287/91 / NCTC 13346).